A 148-amino-acid chain; its full sequence is Proline-rich protein 13 (148 aa).

The interval 1–148 is disordered; the sequence is MWNPNAGQPG…SSSSSSSDSD (148 aa). Pro residues-rich tracts occupy residues 27 to 67 and 75 to 93; these read AHPP…PQPG and GPYPPPYPPPAPGIPPVNP. Positions 109–135 are enriched in basic residues; that stretch reads MQKKMKKAHKKMHKHQKHHKYHKHGKH. A compositionally biased stretch (low complexity) spans 136–148; it reads SSSSSSSSSSDSD.

Its subcellular location is the nucleus. Negatively regulates TSP1 expression at the level of transcription. This down-regulation was shown to reduce taxane-induced apoptosis. The sequence is that of Proline-rich protein 13 (PRR13) from Homo sapiens (Human).